The sequence spans 425 residues: Dihydroorotase (425 aa).

Zn(2+) is bound by residues His-61 and His-63. Residues 63 to 65 (HLR) and Asn-95 contribute to the substrate site. 3 residues coordinate Zn(2+): Asp-153, His-180, and His-233. Asn-279 contributes to the substrate binding site. Residue Asp-306 participates in Zn(2+) binding. Residue Asp-306 is part of the active site. Substrate is bound at residue His-310.

This sequence belongs to the metallo-dependent hydrolases superfamily. DHOase family. Class I DHOase subfamily. The cofactor is Zn(2+).

It carries out the reaction (S)-dihydroorotate + H2O = N-carbamoyl-L-aspartate + H(+). It functions in the pathway pyrimidine metabolism; UMP biosynthesis via de novo pathway; (S)-dihydroorotate from bicarbonate: step 3/3. Its function is as follows. Catalyzes the reversible cyclization of carbamoyl aspartate to dihydroorotate. This is Dihydroorotase from Geobacter sulfurreducens (strain ATCC 51573 / DSM 12127 / PCA).